Consider the following 827-residue polypeptide: Glycerol-3-phosphate acyltransferase 1, mitochondrial (827 aa).

Residues 1–87 (MEESSVTVGT…FFNPSIPSLG (87 aa)) are Cytoplasmic-facing. The important for mitochondrial localization stretch occupies residues 80–120 (NPSIPSLGLRNVIYINETHTRHRGWLARRLSYILFVQERDV). An intramembrane segment occupies 88–118 (LRNVIYINETHTRHRGWLARRLSYILFVQER). Residues 119-827 (DVHKGMFATS…LEYILSFVVL (709 aa)) lie on the Cytoplasmic side of the membrane. Residues 230 to 235 (HRSHID) carry the HXXXXD motif motif. CoA-binding residues include R278, R279, K288, R293, and R328. The residue at position 380 (S380) is a Phosphoserine. CoA is bound at residue R462. Phosphoserine is present on residues S687 and S694. K779 and K783 each carry N6-acetyllysine.

Belongs to the GPAT/DAPAT family. Highest levels in liver, intermediate levels in muscle and kidney, and lowest levels in lung and brain.

The protein resides in the mitochondrion outer membrane. It catalyses the reaction sn-glycerol 3-phosphate + an acyl-CoA = a 1-acyl-sn-glycero-3-phosphate + CoA. The enzyme catalyses (9Z,12Z)-octadecadienoyl-CoA + sn-glycerol 3-phosphate = 1-(9Z,12Z)-octadecadienoyl-sn-glycero-3-phosphate + CoA. It carries out the reaction sn-glycerol 3-phosphate + (9Z)-octadecenoyl-CoA = 1-(9Z-octadecenoyl)-sn-glycero-3-phosphate + CoA. The catalysed reaction is sn-glycerol 3-phosphate + octadecanoyl-CoA = 1-octadecanoyl-sn-glycero-3-phosphate + CoA. It catalyses the reaction sn-glycerol 3-phosphate + hexadecanoyl-CoA = 1-hexadecanoyl-sn-glycero-3-phosphate + CoA. The enzyme catalyses dodecanoyl-CoA + sn-glycerol 3-phosphate = 1-dodecanoyl-sn-glycerol 3-phosphate + CoA. It carries out the reaction 1-acyl-sn-glycero-3-phospho-(1'-sn-glycerol) + an acyl-CoA = a 1,2-diacyl-sn-glycero-3-phospho-(1'-sn-glycerol) + CoA. The protein operates within phospholipid metabolism; CDP-diacylglycerol biosynthesis; CDP-diacylglycerol from sn-glycerol 3-phosphate: step 1/3. Mitochondrial membrane protein that catalyzes the essential first step of biosynthesis of glycerolipids such as triglycerides, phosphatidic acids and lysophosphatidic acids. Esterifies acyl-group from acyl-coenzyme A (acyl-CoA) to the sn-1 position of glycerol-3-phosphate, to produce lysophosphatidic acid. Has a narrow hydrophobic binding cleft that selects for a linear acyl chain. Catalytic activity is higher for substrates with a 16-carbon acyl chain. This is Glycerol-3-phosphate acyltransferase 1, mitochondrial from Mus musculus (Mouse).